The chain runs to 54 residues: Zinc-containing ferredoxin A (54 aa).

The tract at residues 1–21 is disordered; sequence GIDPNYRTSRPEVGTHEGHKV. Positions 1 to 36 are N-terminal extension; that stretch reads GIDPNYRTSRPEVGTHEGHKVYGPVENPKVLGIHGA. The segment covering 9 to 20 has biased composition (basic and acidic residues); sequence SRPEVGTHEGHK. Zn(2+) contacts are provided by histidine 16 and histidine 19. At lysine 29 the chain carries N6-methyllysine. Residue histidine 34 participates in Zn(2+) binding. Residues 35–54 form the 4Fe-4S ferredoxin-type 1 domain; that stretch reads GAIVGVDFDLCIADGSCINA. [3Fe-4S] cluster contacts are provided by cysteine 45 and cysteine 51.

Requires [3Fe-4S] cluster as cofactor. It depends on [4Fe-4S] cluster as a cofactor. Zn(2+) is required as a cofactor.

In terms of biological role, ferredoxins are iron-sulfur proteins that transfer electrons in a wide variety of metabolic reactions. The chain is Zinc-containing ferredoxin A (zfx) from Sulfuracidifex metallicus (Sulfolobus metallicus).